The primary structure comprises 651 residues: Ion-translocating oxidoreductase complex subunit C (651 aa).

2 consecutive 4Fe-4S ferredoxin-type domains span residues glutamate 368–tyrosine 398 and lysine 408–phenylalanine 437. 8 residues coordinate [4Fe-4S] cluster: cysteine 378, cysteine 381, cysteine 384, cysteine 388, cysteine 417, cysteine 420, cysteine 423, and cysteine 427. 2 stretches are compositionally biased toward basic and acidic residues: residues glutamine 465–alanine 477 and alanine 485–glutamate 513. 2 disordered regions span residues glutamine 465–aspartate 565 and leucine 583–lysine 624. 2 stretches are compositionally biased toward polar residues: residues valine 554–threonine 564 and asparagine 587–glutamate 600. Residues glutamate 602 to glutamine 614 are compositionally biased toward basic and acidic residues.

Belongs to the 4Fe4S bacterial-type ferredoxin family. RnfC subfamily. In terms of assembly, the complex is composed of six subunits: RnfA, RnfB, RnfC, RnfD, RnfE and RnfG. It depends on [4Fe-4S] cluster as a cofactor.

It localises to the cell inner membrane. Its function is as follows. Part of a membrane-bound complex that couples electron transfer with translocation of ions across the membrane. This is Ion-translocating oxidoreductase complex subunit C from Haemophilus influenzae (strain PittEE).